The chain runs to 328 residues: Cell cycle control protein 50A (328 aa).

Residues Met-1–Pro-28 form a disordered region. Ala-2 is subject to N-acetylalanine. The segment at Ala-2 to Gly-48 is required for ATPase and aminophospholipid flippase activity. Topologically, residues Ala-2–Thr-49 are cytoplasmic. Residues Thr-49–His-315 form an interaction with ATP8A2 region. Residues Val-50–Val-70 form a helical membrane-spanning segment. Residues Thr-71–Leu-292 lie on the Exoplasmic loop side of the membrane. The segment at Arg-102 to Arg-125 is disordered. Cys-121 and Cys-135 are disulfide-bonded. 2 N-linked (GlcNAc...) asparagine glycosylation sites follow: Asn-144 and Asn-261. The chain crosses the membrane as a helical span at residues Gly-293–Ile-313. The Cytoplasmic segment spans residues Asn-314 to Ile-328.

It belongs to the CDC50/LEM3 family. As to quaternary structure, component of various P4-ATPase flippase complexes which consists of a catalytic alpha subunit and an accessory beta subunit. Interacts with ATP8A1 to form a flippase complex; this complex forms an intermediate phosphoenzyme. Interacts with ATP8A2 to form a flippase complex. TP8B1:TMEM30A and ATP8B2:TMEM30A flippase complexes have been shown to form intermediate phosphoenzymes in vitro. Interacts with alpha subunits ATP8A1, ATP8B1, ATP8B2, ATP8B4, ATP10A, ATP10B, ATP10D, ATP11A, ATP11B and ATP11C. In terms of processing, N-glycosylated. Contains high mannose-type oligosaccharides.

It is found in the membrane. It localises to the golgi apparatus. The protein localises to the cytoplasmic vesicle. The protein resides in the secretory vesicle membrane. Its subcellular location is the apical cell membrane. It is found in the photoreceptor inner segment. It localises to the cell projection. The protein localises to the cilium. The protein resides in the photoreceptor outer segment. Its function is as follows. Accessory component of a P4-ATPase flippase complex which catalyzes the hydrolysis of ATP coupled to the transport of aminophospholipids from the outer to the inner leaflet of various membranes and ensures the maintenance of asymmetric distribution of phospholipids. Phospholipid translocation also seems to be implicated in vesicle formation and in uptake of lipid signaling molecules. The beta subunit may assist in binding of the phospholipid substrate. Required for the proper folding, assembly and ER to Golgi exit of the ATP8A2:TMEM30A flippase complex. ATP8A2:TMEM30A may be involved in regulation of neurite outgrowth, and, reconstituted to liposomes, predomiminantly transports phosphatidylserine (PS) and to a lesser extent phosphatidylethanolamine (PE). The ATP8A1:TMEM30A flippase complex seems to play a role in regulation of cell migration probably involving flippase-mediated translocation of phosphatidylethanolamine (PE) at the plasma membrane. Required for the formation of the ATP8A2, ATP8B1 and ATP8B2 P-type ATPAse intermediate phosphoenzymes. Involved in uptake of platelet-activating factor (PAF). Can also mediate the export of alpha subunits ATP8A1, ATP8B1, ATP8B2, ATP8B4, ATP10A, ATP10B, ATP10D, ATP11A, ATP11B and ATP11C from ER to other membrane localizations. The polypeptide is Cell cycle control protein 50A (Rattus norvegicus (Rat)).